The sequence spans 322 residues: Sideroflexin-2 (322 aa).

Met1 carries the N-acetylmethionine modification. The next 5 helical transmembrane spans lie at 99–119 (GMLI…VIFW), 147–167 (ALSY…MNMW), 174–194 (LVGR…NIPM), 223–243 (VGIA…MILL), and 266–286 (LQVL…CGLF).

Belongs to the sideroflexin family. As to expression, expressed in brain, heart, kidney, spleen, thymus, liver, stomach and skin.

It localises to the mitochondrion inner membrane. It is found in the mitochondrion outer membrane. The catalysed reaction is L-serine(in) = L-serine(out). Its function is as follows. Mitochondrial amino-acid transporter that mediates transport of serine into mitochondria. Involved in mitochondrial iron homeostasis by regulating heme biosynthesis. The polypeptide is Sideroflexin-2 (Mus musculus (Mouse)).